The following is a 212-amino-acid chain: Tetraspanin-31-B (212 aa).

The Cytoplasmic segment spans residues 1 to 12 (MVCGGFTCSKNA). A helical transmembrane segment spans residues 13 to 33 (LCALNVVYMLVGVLLIIVAAW). Residues 34–44 (GKGFGIVSSIH) lie on the Extracellular side of the membrane. A helical transmembrane segment spans residues 45 to 65 (IIGGVIAIGVFLLLIAIIGLI). The Cytoplasmic segment spans residues 66–72 (GAVSHHQ). Residues 73 to 93 (VMLFIYMVVLILVFIFQFIVS) traverse the membrane as a helical segment. Residues 94–175 (CSCLAMNRSQ…MLNHADEALK (82 aa)) lie on the Extracellular side of the membrane. N100, N109, N117, and N134 each carry an N-linked (GlcNAc...) asparagine glycan. Residues 176-196 (ILGGVGLFFSFTEILGVWLAF) form a helical membrane-spanning segment. At 197–212 (RYRNQKDPRANPSAFL) the chain is on the cytoplasmic side.

This sequence belongs to the tetraspanin (TM4SF) family.

It localises to the membrane. This Xenopus laevis (African clawed frog) protein is Tetraspanin-31-B (tspan31-b).